The chain runs to 772 residues: Carnitine O-palmitoyltransferase 1, muscle isoform (772 aa).

The Cytoplasmic segment spans residues 1–47; it reads MAEAHQAVAFQFTVTPEGVDFRLSREALKHIYLSGINSWKKRLIRIK. The helical transmembrane segment at 48–73 threads the bilayer; that stretch reads NGILRGVYPGSPTSWLVVASATAGSS. Residues 74 to 102 are Mitochondrial intermembrane-facing; that stretch reads YYNVDISMGLVNHIQRCLPERYGPYWTPQ. Residues 103–122 form a helical membrane-spanning segment; that stretch reads TRALLSMAVVSTGVWMIGIF. The Cytoplasmic segment spans residues 123 to 772; it reads FFRQTLKLLL…DLFQVPKTDS (650 aa). Catalysis depends on His473, which acts as the Proton acceptor. 555–567 serves as a coordination point for CoA; it reads GKGLIKKCRTSPD. Tyr589 and Thr602 together coordinate (R)-carnitine.

Belongs to the carnitine/choline acetyltransferase family.

The protein localises to the mitochondrion outer membrane. The catalysed reaction is (R)-carnitine + hexadecanoyl-CoA = O-hexadecanoyl-(R)-carnitine + CoA. It functions in the pathway lipid metabolism; fatty acid beta-oxidation. Catalyzes the transfer of the acyl group of long-chain fatty acid-CoA conjugates onto carnitine, an essential step for the mitochondrial uptake of long-chain fatty acids and their subsequent beta-oxidation in the mitochondrion. The chain is Carnitine O-palmitoyltransferase 1, muscle isoform (CPT1B) from Sus scrofa (Pig).